A 162-amino-acid polypeptide reads, in one-letter code: COP9 signalosome complex subunit 9 (162 aa).

Residues 6–118 (ETIKSLEDPY…SVSKSMKFSR (113 aa)) enclose the PCI domain.

As to quaternary structure, component of a COP9 signalosome-like (CSN) complex, composed of at least RRI1/CSN5, CSN9, RRI2/CSN10, PCI8/CSN11, CSN12 and CSI1. In the complex, it probably interacts directly with CSN12 and CSI1. Also interacts with RPN5.

Its subcellular location is the cytoplasm. It localises to the nucleus. Functionally, component of the COP9 signalosome (CSN) complex that acts as a regulator of the ubiquitin (Ubl) conjugation pathway by mediating the deneddylation of the cullin subunit of SCF-type E3 ubiquitin-protein ligase complexes. The CSN complex is involved in the regulation of the mating pheromone response. The protein is COP9 signalosome complex subunit 9 (CSN9) of Saccharomyces cerevisiae (strain ATCC 204508 / S288c) (Baker's yeast).